Here is an 88-residue protein sequence, read N- to C-terminus: Small ribosomal subunit protein uS17 (88 aa).

This sequence belongs to the universal ribosomal protein uS17 family. In terms of assembly, part of the 30S ribosomal subunit.

In terms of biological role, one of the primary rRNA binding proteins, it binds specifically to the 5'-end of 16S ribosomal RNA. The protein is Small ribosomal subunit protein uS17 of Nitratidesulfovibrio vulgaris (strain ATCC 29579 / DSM 644 / CCUG 34227 / NCIMB 8303 / VKM B-1760 / Hildenborough) (Desulfovibrio vulgaris).